Here is a 177-residue protein sequence, read N- to C-terminus: Large ribosomal subunit protein uL6 (177 aa).

Belongs to the universal ribosomal protein uL6 family. Part of the 50S ribosomal subunit.

This protein binds to the 23S rRNA, and is important in its secondary structure. It is located near the subunit interface in the base of the L7/L12 stalk, and near the tRNA binding site of the peptidyltransferase center. The polypeptide is Large ribosomal subunit protein uL6 (Pseudomonas putida (strain W619)).